Reading from the N-terminus, the 250-residue chain is Phosphatidylglycerol--prolipoprotein diacylglyceryl transferase (250 aa).

The next 4 helical transmembrane spans lie at 11 to 31 (LAIR…LLLA), 49 to 69 (FLIA…IFEF), 84 to 104 (QGGL…YIYL), and 109 to 129 (ESFF…QAIG). R130 is a binding site for a 1,2-diacyl-sn-glycero-3-phospho-(1'-sn-glycerol). Helical transmembrane passes span 169–189 (PTFL…VYLL), 196–216 (GIVF…IEGL), and 228–248 (VAQL…YNII).

Belongs to the Lgt family.

Its subcellular location is the cell membrane. The enzyme catalyses L-cysteinyl-[prolipoprotein] + a 1,2-diacyl-sn-glycero-3-phospho-(1'-sn-glycerol) = an S-1,2-diacyl-sn-glyceryl-L-cysteinyl-[prolipoprotein] + sn-glycerol 1-phosphate + H(+). It functions in the pathway protein modification; lipoprotein biosynthesis (diacylglyceryl transfer). Functionally, catalyzes the transfer of the diacylglyceryl group from phosphatidylglycerol to the sulfhydryl group of the N-terminal cysteine of a prolipoprotein, the first step in the formation of mature lipoproteins. The polypeptide is Phosphatidylglycerol--prolipoprotein diacylglyceryl transferase (Clostridium botulinum (strain 657 / Type Ba4)).